Consider the following 330-residue polypeptide: Transcription factor TGA6 (330 aa).

Polar residues predominate over residues 1 to 13 (MADTSSRTDVSTD). The segment at 1–45 (MADTSSRTDVSTDGDTDHRDLGSDRGHMHAAASDSSDRSKDKLDQ) is disordered. Basic and acidic residues-rich tracts occupy residues 15–27 (DTDH…DRGH) and 35–45 (SSDRSKDKLDQ). The 64-residue stretch at 44 to 107 (DQKTLRRLAQ…SSGDQAHSTG (64 aa)) folds into the bZIP domain. Coiled-coil stretches lie at residues 45–142 (QKTL…HAGD) and 217–233 (INSL…ALSQ). Residues 46-66 (KTLRRLAQNREAARKSRLRKK) are basic motif. The leucine-zipper stretch occupies residues 72–86 (LENSRLKLTQLEQEL). A DOG1 domain is found at 111 to 327 (ALAFDAEHSR…RALSSLWLAR (217 aa)).

It belongs to the bZIP family. As to quaternary structure, binds DNA as a dimer. Interacts with NPR1, NPR3 and NPR4. Interacts with GRXC9/GRX480. Expressed predominantly in roots and flowers.

It localises to the nucleus. In terms of biological role, transcriptional activator that binds specifically to the DNA sequence 5'-TGACG-3'. Recognizes ocs elements like the as-1 motif of the cauliflower mosaic virus 35S promoter. Binding to the as-1-like cis elements mediate auxin- and salicylic acid-inducible transcription. May be involved in the induction of the systemic acquired resistance (SAR) via its interaction with NPR1. Could also bind to the Hex-motif (5'-TGACGTGG-3') another cis-acting element found in plant histone promoters. This is Transcription factor TGA6 (TGA6) from Arabidopsis thaliana (Mouse-ear cress).